A 693-amino-acid chain; its full sequence is Bacterial dynamin-like protein (693 aa).

Topologically, residues 1-521 (MVNQVATDRF…DNSPGWAKWA (521 aa)) are cytoplasmic. The 248-residue stretch at 66–313 (QQGVFRLLVL…QADLDGTGFP (248 aa)) folds into the Dynamin-type G domain. Positions 76-83 (GDMKRGKS) are G1 motif. A GTP-binding site is contributed by 79–84 (KRGKST). A G2 motif region spans residues 102–103 (CT). A G3 motif region spans residues 180–183 (DSPG). Position 235 to 241 (235 to 241 (FLVNAWD)) interacts with GTP. The segment at 238–241 (NAWD) is G4 motif. Residue Asn-268 is a region of interest, G5 motif. A GTP-binding site is contributed by 292-293 (SI). The interval 311–571 (GFPKFMDSLN…TAVTGILLGP (261 aa)) is middle domain. Residues 347-378 (REAVARRIPLLEQDVNELKKRIDSVEPEFNKL) are a coiled coil. Residues 522–574 (MGLLSLSKGNLAGFALAGAGFDWKNILLNYFTVIGIGGIITAVTGILLGPIGF) lie within the membrane without spanning it. Residues 572-606 (IGFALLGLGVGFLQADQARRELVKTAKKELVKHLP) are paddle domain. At 575 to 693 (ALLGLGVGFL…AYSNLLAYYS (119 aa)) the chain is on the cytoplasmic side. The tract at residues 607 to 693 (QVAHEQSQVV…AYSNLLAYYS (87 aa)) is GED. Residues 661 to 688 (ESEFNRLKNLQEDVIAQLQKIEAAYSNL) are a coiled coil.

It belongs to the TRAFAC class dynamin-like GTPase superfamily. Dynamin/Fzo/YdjA family. Mitofusin subfamily. In terms of assembly, homodimer. Self-assembles in the presence of GMP-PNP and liposomes, and probably also in the presence of GTP.

Its subcellular location is the cell inner membrane. The enzyme catalyses GTP + H2O = GDP + phosphate + H(+). Its function is as follows. Dynamin-related GTPase probably involved in membrane remodeling. Lipid and nucleotide-binding are thought to induce a large intramolecular rearrangement, leading to assembly on lipid bilayers and possible membrane curving. In the presence of the non-hydrolyzable GTP analog GMP-PNP self-assembles on a lipid bilayer; this does not stimulate subsequent GTPase activity. Does not bind lipids in the presence of GDP; perhaps GTP hydrolysis disrupts membrane-binding. In Nostoc punctiforme (strain ATCC 29133 / PCC 73102), this protein is Bacterial dynamin-like protein.